The chain runs to 506 residues: Cytochrome P450 52B1 (506 aa).

Cysteine 451 contributes to the heme binding site.

It belongs to the cytochrome P450 family. The cofactor is heme.

Functionally, together with an NADPH cytochrome P450 the enzyme system catalyzes the terminal hydroxylation as the first step in the assimilation of alkanes and fatty acids. The sequence is that of Cytochrome P450 52B1 (CYP52B1) from Candida tropicalis (Yeast).